Here is a 141-residue protein sequence, read N- to C-terminus: Large ribosomal subunit protein uL11 (141 aa).

This sequence belongs to the universal ribosomal protein uL11 family. Part of the ribosomal stalk of the 50S ribosomal subunit. Interacts with L10 and the large rRNA to form the base of the stalk. L10 forms an elongated spine to which L12 dimers bind in a sequential fashion forming a multimeric L10(L12)X complex. In terms of processing, one or more lysine residues are methylated.

Functionally, forms part of the ribosomal stalk which helps the ribosome interact with GTP-bound translation factors. The sequence is that of Large ribosomal subunit protein uL11 from Syntrophomonas wolfei subsp. wolfei (strain DSM 2245B / Goettingen).